A 211-amino-acid chain; its full sequence is Large ribosomal subunit protein uL4 (211 aa).

Positions 42–73 are disordered; the sequence is NNRQGTHSTKDRSEVRGGGIKPWAQKGTGRAR.

This sequence belongs to the universal ribosomal protein uL4 family. As to quaternary structure, part of the 50S ribosomal subunit.

In terms of biological role, one of the primary rRNA binding proteins, this protein initially binds near the 5'-end of the 23S rRNA. It is important during the early stages of 50S assembly. It makes multiple contacts with different domains of the 23S rRNA in the assembled 50S subunit and ribosome. Functionally, forms part of the polypeptide exit tunnel. This Leptospira biflexa serovar Patoc (strain Patoc 1 / Ames) protein is Large ribosomal subunit protein uL4.